The chain runs to 240 residues: Uridylate kinase (240 aa).

Residue 12–15 (KLSG) coordinates ATP. Residues 20 to 25 (GKQGFG) form an involved in allosteric activation by GTP region. Glycine 54 provides a ligand contact to UMP. Positions 55 and 59 each coordinate ATP. UMP is bound by residues aspartate 74 and 135 to 142 (TGNPYFST). 3 residues coordinate ATP: asparagine 163, tyrosine 169, and aspartate 172.

It belongs to the UMP kinase family. Homohexamer.

It localises to the cytoplasm. It carries out the reaction UMP + ATP = UDP + ADP. It participates in pyrimidine metabolism; CTP biosynthesis via de novo pathway; UDP from UMP (UMPK route): step 1/1. Allosterically activated by GTP. Inhibited by UTP. Its function is as follows. Catalyzes the reversible phosphorylation of UMP to UDP. This chain is Uridylate kinase, found in Geobacillus kaustophilus (strain HTA426).